Consider the following 203-residue polypeptide: Anti-sigma-W factor RsiW (203 aa).

Over 1–86 (MECPKEIVLL…TARLRRFLHR (86 aa)) the chain is Cytoplasmic. Zn(2+) contacts are provided by His-30, Cys-34, and Cys-37. Residues 87 to 103 (HPLLTAASLFLALTLGS) traverse the membrane as a helical segment. The Extracellular segment spans residues 104–203 (LASSWGERGA…RFNRALQSIE (100 aa)).

This sequence belongs to the zinc-associated anti-sigma factor (ZAS) superfamily. Anti-sigma-W factor family. Zn(2+) is required as a cofactor. Is processed by three successive proteolytic events. First, the extracellular region of RsiW is cleaved by PrsW (Site-1 cleavage) in response to cell envelope stresses. Next, it undergoes cleavage at an intramembrane site (Site-2 cleavage) mediated by RasP. This cleavage uncovers a cryptic proteolytic tag with conserved alanine residues in the transmembrane segment, that is recognized mainly by the ClpXP protease, which completely degrades the protein in the cytoplasm and leads to the induction of the sigma-W-controlled genes.

The protein localises to the membrane. In terms of biological role, is the anti-sigma factor for SigW. The presence of RsiW leads to the inactivation of SigW, and its proteolytic destruction to sigma-W activation. In Geobacillus kaustophilus (strain HTA426), this protein is Anti-sigma-W factor RsiW (rsiW).